A 204-amino-acid polypeptide reads, in one-letter code: Putative 3-methyladenine DNA glycosylase (204 aa).

It belongs to the DNA glycosylase MPG family.

This Bacillus cytotoxicus (strain DSM 22905 / CIP 110041 / 391-98 / NVH 391-98) protein is Putative 3-methyladenine DNA glycosylase.